The chain runs to 493 residues: Matrilin-1 (493 aa).

The N-terminal stretch at 1 to 23 (MDGIFCALPLSLLLLLQSCGVWG) is a signal peptide. One can recognise a VWFA 1 domain in the interval 24–220 (APPQPRGTLC…THKFQEAFCV (197 aa)). The N-linked (GlcNAc...) asparagine glycan is linked to asparagine 74. Residues 221–261 (VSDLCATGDHDCEQICISTPGSYKCACKEGFTLNNDGKTCS) form the EGF-like domain. 3 disulfide bridges follow: cysteine 225-cysteine 236, cysteine 232-cysteine 245, and cysteine 247-cysteine 260. Residues 262 to 450 (ACSGGSGSAL…GKKLQMKICV (189 aa)) enclose the VWFA 2 domain. Residues 462–492 (KFQTKVEELINTLQQKLEAVAKRIEALENKI) adopt a coiled-coil conformation.

Homotrimer. Expressed in xyphoid cartilage and chondrocytes (at protein level).

The protein localises to the secreted. It is found in the extracellular space. Its subcellular location is the extracellular matrix. Its function is as follows. A major component of the extracellular matrix of non-articular cartilage. Binds to type 2 collagens and forms long concatenated protein networks as part of the extracellular matrix. Required for the network-like organization and bundling of collagen fibrils surrounding chondrocytes in the zones of maturation and hypertrophy. Required for mechanotransduction and adaption to mechanical loading in cartilage chondrocytes, resulting in an increase in expression of the extracellular matrix components ACAN and COL2A1. Acts as a moderator of angiogenesis in response to injury. The sequence is that of Matrilin-1 from Gallus gallus (Chicken).